The primary structure comprises 275 residues: Putative carbamate hydrolase RutD (275 aa).

The protein belongs to the AB hydrolase superfamily. Hydrolase RutD family.

It carries out the reaction carbamate + 2 H(+) = NH4(+) + CO2. In terms of biological role, involved in pyrimidine catabolism. May facilitate the hydrolysis of carbamate, a reaction that can also occur spontaneously. The protein is Putative carbamate hydrolase RutD of Escherichia coli (strain UTI89 / UPEC).